Reading from the N-terminus, the 504-residue chain is MEEFQGYLEFDGARQHNFLYPFFFRESIYVLAYDHGLNRLNRNRSIFLENAGYDTKYSSLIVKRLIFRIYEQNHLIISTNDFSQNPFFGHTNHFYYQTISALFAVIVEIPFSLRLVSSFGGKQLAKSYNLQSIHSIFPFLEDKLSHLNYVLDVLIPYPIHLEILVQTLRYRVKDASSLHLLRFCLYEYWNWKNFYTQKKSILNTKFFLFLYNCHVCEYESIFFFLRKRSSHLRSTSSGVLFERIFFYRKIEHLLKVFVNNFQDILGLFKDPFIHYVRYHGKCILAAKDTPLLMNKWKYYFVNLWQWHFSVWFQWQKVHINKLSKDNLDFLGYLSSLRLNPLVVRSQMLENSFLIDNVRKEFDTKIPICSIIGSFAKEKFCNVLGYPISKSTWMDSSDSDILDRFVRICRNLSHYHSGSSKKKNLYRIKYILRLSCVKTLARKHKSTVRAFLKRLGSVLLEEFLTGEEQVLSLIFSRGYSPSQRFYRVRIWYLDIIYLNDLVNHE.

The protein belongs to the intron maturase 2 family. MatK subfamily.

The protein resides in the plastid. It localises to the chloroplast. Its function is as follows. Usually encoded in the trnK tRNA gene intron. Probably assists in splicing its own and other chloroplast group II introns. This Cynophalla hastata (Broadleaf caper) protein is Maturase K.